A 585-amino-acid chain; its full sequence is Frizzled-5 (585 aa).

Positions 1–26 (MARPDPSAPPSLLLLLLAQLVGRAAA) are cleaved as a signal peptide. Topologically, residues 27 to 238 (ASKAPVCQEI…PDERTFATFW (212 aa)) are extracellular. The 123-residue stretch at 28–150 (SKAPVCQEIT…GDAEVLCMDY (123 aa)) folds into the FZ domain. Disulfide bonds link cysteine 33-cysteine 94, cysteine 41-cysteine 87, cysteine 78-cysteine 116, cysteine 105-cysteine 147, and cysteine 109-cysteine 133. N-linked (GlcNAc...) asparagine glycosylation is present at asparagine 47. Asparagine 151 carries N-linked (GlcNAc...) asparagine glycosylation. Residues 156–182 (TTASPKSFPAKPTLPGPPGAPSSGGEC) form a disordered region. A helical membrane pass occupies residues 239-259 (IGLWSVLCFISTSTTVATFLI). Over 260–270 (DMERFRYPERP) the chain is Cytoplasmic. A helical transmembrane segment spans residues 271–291 (IIFLSACYLCVSLGFLVRLVV). Topologically, residues 292–315 (GHASVACSREHSHIHYETTGPALC) are extracellular. A helical membrane pass occupies residues 316 to 336 (TVVFLLVYFFGMASSIWWVIL). The Cytoplasmic portion of the chain corresponds to 337-358 (SLTWFLAAGMKWGNEAIAGYAQ). The helical transmembrane segment at 359-379 (YFHLAAWLIPSVKSITALALS) threads the bilayer. The Extracellular segment spans residues 380 to 402 (SVDGDPVAGVCYVGNQNLNSLRG). Residues 403 to 423 (FVLGPLVLYLLVGTLFLLAGF) traverse the membrane as a helical segment. Residues 424 to 449 (VSLFRIRSVIKQGGTKTDKLEKLMIR) lie on the Cytoplasmic side of the membrane. Residues 450–470 (IGIFTLLYTVPASIVVACYLY) form a helical membrane-spanning segment. The Extracellular segment spans residues 471-500 (EQHYRESWEAALTCACPGSDAGQPRAKPEY). The chain crosses the membrane as a helical span at residues 501–521 (WVLMLKYFMCLVVGITSGVWI). Residues 522–585 (WSGKTLESWR…YHKQVSLSHV (64 aa)) lie on the Cytoplasmic side of the membrane. A Lys-Thr-X-X-X-Trp motif, mediates interaction with the PDZ domain of Dvl family members motif is present at residues 525–530 (KTLESW). The PDZ-binding motif lies at 583–585 (SHV).

The protein belongs to the G-protein coupled receptor Fz/Smo family. As to quaternary structure, binding of unsaturated fatty acid molecules (via FZ domain) promotes homodimerization (via FZ domain). Interacts with WNT2B. Interacts with WNT7A. Interacts with GOPC. Post-translationally, ubiquitinated by RNF43 and ZNRF3, leading to its degradation by the proteasome.

The protein resides in the cell membrane. It localises to the golgi apparatus membrane. It is found in the synapse. The protein localises to the perikaryon. Its subcellular location is the cell projection. The protein resides in the dendrite. It localises to the axon. Its function is as follows. Receptor for Wnt proteins. Functions in the canonical Wnt/beta-catenin signaling pathway. In vitro activates WNT2, WNT10B, WNT5A, but not WNT2B or WNT4 signaling. In neurons, activation by WNT7A promotes formation of synapses. May be involved in transduction and intercellular transmission of polarity information during tissue morphogenesis and/or in differentiated tissues. Plays a role in yolk sac angiogenesis and in placental vascularization. Plays a role in ocular development. The sequence is that of Frizzled-5 (Fzd5) from Rattus norvegicus (Rat).